The primary structure comprises 631 residues: tRNA uridine 5-carboxymethylaminomethyl modification enzyme MnmG (631 aa).

FAD-binding positions include 13-18 (GGGHAG), valine 125, and serine 180. 273 to 287 (GPRYCPSIEDKVMRF) is an NAD(+) binding site. Glutamine 370 contributes to the FAD binding site.

It belongs to the MnmG family. Homodimer. Heterotetramer of two MnmE and two MnmG subunits. Requires FAD as cofactor.

Its subcellular location is the cytoplasm. Its function is as follows. NAD-binding protein involved in the addition of a carboxymethylaminomethyl (cmnm) group at the wobble position (U34) of certain tRNAs, forming tRNA-cmnm(5)s(2)U34. This is tRNA uridine 5-carboxymethylaminomethyl modification enzyme MnmG from Vibrio campbellii (strain ATCC BAA-1116).